Consider the following 192-residue polypeptide: BON1-associated protein 1 (192 aa).

The region spanning 1–119 (MIYFGRSIDN…RYSPEGHLNF (119 aa)) is the C2 domain.

As to quaternary structure, interacts with BON1 (via VWA domain), BON2 and BON3. Expressed in roots, leaves, stems and flowers.

The protein resides in the membrane. In terms of biological role, negative regulator of cell death and defense responses. Exhibits calcium-dependent phospholipid binding properties. This Arabidopsis thaliana (Mouse-ear cress) protein is BON1-associated protein 1 (BAP1).